Reading from the N-terminus, the 72-residue chain is Translation initiation factor IF-1 2 (72 aa).

An S1-like domain is found at 1–72; it reads MAKEDTIQMQ…SRARIVFRAK (72 aa).

Belongs to the IF-1 family. Component of the 30S ribosomal translation pre-initiation complex which assembles on the 30S ribosome in the order IF-2 and IF-3, IF-1 and N-formylmethionyl-tRNA(fMet); mRNA recruitment can occur at any time during PIC assembly.

The protein resides in the cytoplasm. In terms of biological role, one of the essential components for the initiation of protein synthesis. Stabilizes the binding of IF-2 and IF-3 on the 30S subunit to which N-formylmethionyl-tRNA(fMet) subsequently binds. Helps modulate mRNA selection, yielding the 30S pre-initiation complex (PIC). Upon addition of the 50S ribosomal subunit IF-1, IF-2 and IF-3 are released leaving the mature 70S translation initiation complex. The chain is Translation initiation factor IF-1 2 from Chromobacterium violaceum (strain ATCC 12472 / DSM 30191 / JCM 1249 / CCUG 213 / NBRC 12614 / NCIMB 9131 / NCTC 9757 / MK).